The sequence spans 227 residues: MRRLIRVALLTLLLLVAAPYVLTLVYGAGQPVSTLMVWRWLAGATVTRQWVDIERMAPALPRTVVASEDAKFCSHSGIDWDSVRDVLDDLQDGGEASRGGSTITQQVAKNLFLWPGRSVVRKALEFPLAMWIDLVLSKQRILELYLNIAEWGPDGQFGAEAGAAYAFGRSAAQLTPQEAALMASILPNPRVRSAKKPGPGVRRLAATYVARARSAELQQCWRENSGS.

Residues 7–27 (VALLTLLLLVAAPYVLTLVYG) traverse the membrane as a helical segment.

Belongs to the glycosyltransferase 51 family.

The protein localises to the cell inner membrane. The enzyme catalyses [GlcNAc-(1-&gt;4)-Mur2Ac(oyl-L-Ala-gamma-D-Glu-L-Lys-D-Ala-D-Ala)](n)-di-trans,octa-cis-undecaprenyl diphosphate + beta-D-GlcNAc-(1-&gt;4)-Mur2Ac(oyl-L-Ala-gamma-D-Glu-L-Lys-D-Ala-D-Ala)-di-trans,octa-cis-undecaprenyl diphosphate = [GlcNAc-(1-&gt;4)-Mur2Ac(oyl-L-Ala-gamma-D-Glu-L-Lys-D-Ala-D-Ala)](n+1)-di-trans,octa-cis-undecaprenyl diphosphate + di-trans,octa-cis-undecaprenyl diphosphate + H(+). Its pathway is cell wall biogenesis; peptidoglycan biosynthesis. Its function is as follows. Peptidoglycan polymerase that catalyzes glycan chain elongation from lipid-linked precursors. The chain is Biosynthetic peptidoglycan transglycosylase from Rhodopseudomonas palustris (strain HaA2).